The following is a 378-amino-acid chain: Putative aminoglycoside phosphotransferase (378 aa).

ATP contacts are provided by residues arginine 79 and 134-136; that span reads DYV. Catalysis depends on aspartate 249, which acts as the Proton acceptor. Mg(2+) contacts are provided by asparagine 254, aspartate 267, and glutamate 269.

It belongs to the aminoglycoside phosphotransferase family.

In terms of biological role, might catalyze the phosphorylation of aminoglycosides and confer aminoglycoside antibiotics resistance. This chain is Putative aminoglycoside phosphotransferase, found in Mycobacterium tuberculosis (strain CDC 1551 / Oshkosh).